The chain runs to 296 residues: Meiotically up-regulated gene 2 protein (296 aa).

Belongs to the UPF0612 family.

The protein localises to the cytoplasm. It localises to the nucleus. Its function is as follows. Has a role in meiosis. The protein is Meiotically up-regulated gene 2 protein (mug2) of Schizosaccharomyces pombe (strain 972 / ATCC 24843) (Fission yeast).